The primary structure comprises 215 residues: Vesicle-trafficking protein SEC22b (215 aa).

At 1–194 the chain is on the cytoplasmic side; the sequence is MVLLTMIARV…KYLNMRSTYA (194 aa). Residues 6 to 119 form the Longin domain; the sequence is MIARVADGLP…YSFIEFDTFI (114 aa). Residue Lys-38 is modified to N6-acetyllysine. The v-SNARE coiled-coil homology domain occupies 134 to 194; it reads NLGSINTELQ…KYLNMRSTYA (61 aa). Phosphoserine is present on Ser-137. Position 140 is a phosphothreonine (Thr-140). Phosphoserine is present on residues Ser-164, Ser-168, Ser-174, and Ser-177. The chain crosses the membrane as a helical; Anchor for type IV membrane protein span at residues 195-215; it reads KLAAVAVFFIMLIVYVRFWWL.

The protein belongs to the synaptobrevin family. Interacts with STX17. Component of two distinct SNARE complexes consisting of STX5, GOSR2/BOS1, BET1 and SEC22B or STX18, USE1L, BNIP1/SEC20L and SEC22B. YKT6 can probably replace SEC22B as subunit of either complex. Interacts with the COPII Sec23/24 complex composed of SEC23A and SEC24A; recruits SEC22B into COPII-coated vesicles to allow its transport from the endoplasmic reticulum to the Golgi. Interacts with BET1.

Its subcellular location is the endoplasmic reticulum membrane. It is found in the endoplasmic reticulum-Golgi intermediate compartment membrane. It localises to the golgi apparatus. The protein resides in the cis-Golgi network membrane. The protein localises to the trans-Golgi network membrane. Its subcellular location is the melanosome. In terms of biological role, SNARE involved in targeting and fusion of ER-derived transport vesicles with the Golgi complex as well as Golgi-derived retrograde transport vesicles with the ER. This Cricetulus griseus (Chinese hamster) protein is Vesicle-trafficking protein SEC22b (Sec22b).